A 155-amino-acid chain; its full sequence is Secreted RxLR effector protein RXLR-C301 (155 aa).

Positions 1-24 (MRLYALSVSLLAAITLLACVIASA) are cleaved as a signal peptide. The RxLR-dEER signature appears at 34-64 (RRLSQDVSETEITELSESKKPTAQDIDNEER).

This sequence belongs to the RxLR effector family.

It localises to the secreted. The protein resides in the host cell membrane. In terms of biological role, secreted effector that does not suppress pattern-triggered immunity (PTI) in plant host. The sequence is that of Secreted RxLR effector protein RXLR-C301 from Plasmopara halstedii (Downy mildew of sunflower).